The following is a 172-amino-acid chain: Adenine phosphoribosyltransferase (172 aa).

This sequence belongs to the purine/pyrimidine phosphoribosyltransferase family. In terms of assembly, homodimer.

Its subcellular location is the cytoplasm. It catalyses the reaction AMP + diphosphate = 5-phospho-alpha-D-ribose 1-diphosphate + adenine. The protein operates within purine metabolism; AMP biosynthesis via salvage pathway; AMP from adenine: step 1/1. Its function is as follows. Catalyzes a salvage reaction resulting in the formation of AMP, that is energically less costly than de novo synthesis. The chain is Adenine phosphoribosyltransferase from Gloeothece citriformis (strain PCC 7424) (Cyanothece sp. (strain PCC 7424)).